A 213-amino-acid polypeptide reads, in one-letter code: MTDMSHQCVIVGIAGASASGKSLIASTLYRELREQVGDEHIGVIPEDSYYKDQSHLSMEERVKTNYDHPSSMDHSLLFQHLQMLKSGQPIELPVYSYVEHTRTPNTIHVEPKKVIILEGILLLTDARLRNELNFSIFVDTPLDICLMRRIKRDVNERGRSMDSVMAQYQKTVRPMFLQFIEPSKQYADIIVPRGGKNRIAIDILKAKISQFFE.

15–22 is an ATP binding site; the sequence is GASASGKS.

This sequence belongs to the uridine kinase family.

It is found in the cytoplasm. It catalyses the reaction uridine + ATP = UMP + ADP + H(+). The catalysed reaction is cytidine + ATP = CMP + ADP + H(+). It participates in pyrimidine metabolism; CTP biosynthesis via salvage pathway; CTP from cytidine: step 1/3. The protein operates within pyrimidine metabolism; UMP biosynthesis via salvage pathway; UMP from uridine: step 1/1. The sequence is that of Uridine kinase from Klebsiella pneumoniae (strain 342).